The primary structure comprises 194 residues: uncharacterized protein (194 aa).

Residues 6 to 66 (SGKYEKILQA…AIAENLLTHT (61 aa)) enclose the HTH tetR-type domain. Positions 29 to 48 (SISDIVKKAGTAQGTFYLYF) form a DNA-binding region, H-T-H motif.

This is an uncharacterized protein from Bacillus subtilis (strain 168).